Consider the following 175-residue polypeptide: NADH-ubiquinone oxidoreductase chain 6 (175 aa).

The next 5 membrane-spanning stretches (helical) occupy residues 1 to 21 (MMTY…VGFS), 25 to 45 (SPIY…GIIM), 47 to 67 (FGGS…MLVV), 88 to 108 (TVMG…LYVL), and 149 to 169 (YGAW…LVIL).

It belongs to the complex I subunit 6 family. Core subunit of respiratory chain NADH dehydrogenase (Complex I) which is composed of 45 different subunits.

Its subcellular location is the mitochondrion inner membrane. The enzyme catalyses a ubiquinone + NADH + 5 H(+)(in) = a ubiquinol + NAD(+) + 4 H(+)(out). Its function is as follows. Core subunit of the mitochondrial membrane respiratory chain NADH dehydrogenase (Complex I) which catalyzes electron transfer from NADH through the respiratory chain, using ubiquinone as an electron acceptor. Essential for the catalytic activity and assembly of complex I. This is NADH-ubiquinone oxidoreductase chain 6 (MT-ND6) from Equus caballus (Horse).